The chain runs to 593 residues: Aspartate--tRNA(Asp/Asn) ligase (593 aa).

Position 173 (E173) interacts with L-aspartate. The aspartate stretch occupies residues 197–200 (QLFK). R219 is a binding site for L-aspartate. Residues 219 to 221 (RDE) and Q228 contribute to the ATP site. Position 451 (H451) interacts with L-aspartate. An ATP-binding site is contributed by E485. R492 is an L-aspartate binding site. 537–540 (GIDR) provides a ligand contact to ATP.

It belongs to the class-II aminoacyl-tRNA synthetase family. Type 1 subfamily. As to quaternary structure, homodimer.

It is found in the cytoplasm. The catalysed reaction is tRNA(Asx) + L-aspartate + ATP = L-aspartyl-tRNA(Asx) + AMP + diphosphate. Aspartyl-tRNA synthetase with relaxed tRNA specificity since it is able to aspartylate not only its cognate tRNA(Asp) but also tRNA(Asn). Reaction proceeds in two steps: L-aspartate is first activated by ATP to form Asp-AMP and then transferred to the acceptor end of tRNA(Asp/Asn). The polypeptide is Aspartate--tRNA(Asp/Asn) ligase (Legionella pneumophila (strain Corby)).